Consider the following 256-residue polypeptide: MARRPLVMGNWKLNGSKAFTQQLIAELKTELAEITGCDVAIAPPVMYLSEAEIALAGQSTIRLGAQNVDINTQGAFTGDISTAMLQEFCAKYIIIGHSERRTYHAESDQFIAKKFAALKTAGLTPVLCIGETEAENEAGQTQQVCARQIDAIINSLGVEAFNQAVIAYEPIWAIGTGKSATPAQAQAVHAFIRQHIAEKSQAVADQLIIQYGGSVNDTNAAELFSQPDIDGALVGGASLKATAFAEIVKAAEKAKA.

Substrate is bound at residue 10-12 (NWK). The active-site Electrophile is His-97. The Proton acceptor role is filled by Glu-169. Residues Gly-175, Ser-214, and 235–236 (GG) each bind substrate.

The protein belongs to the triosephosphate isomerase family. Homodimer.

It localises to the cytoplasm. The enzyme catalyses D-glyceraldehyde 3-phosphate = dihydroxyacetone phosphate. The protein operates within carbohydrate biosynthesis; gluconeogenesis. Its pathway is carbohydrate degradation; glycolysis; D-glyceraldehyde 3-phosphate from glycerone phosphate: step 1/1. Its function is as follows. Involved in the gluconeogenesis. Catalyzes stereospecifically the conversion of dihydroxyacetone phosphate (DHAP) to D-glyceraldehyde-3-phosphate (G3P). In Haemophilus ducreyi (strain 35000HP / ATCC 700724), this protein is Triosephosphate isomerase.